We begin with the raw amino-acid sequence, 34 residues long: Dermaseptin-H5 (34 aa).

As to expression, expressed by the skin glands.

It localises to the secreted. Has antimicrobial activity. This Pithecopus hypochondrialis (Orange-legged leaf frog) protein is Dermaseptin-H5.